Consider the following 325-residue polypeptide: UPF0285 protein MA_3856 (325 aa).

The protein belongs to the UPF0285 family.

This chain is UPF0285 protein MA_3856, found in Methanosarcina acetivorans (strain ATCC 35395 / DSM 2834 / JCM 12185 / C2A).